The following is a 198-amino-acid chain: E3 ubiquitin-protein ligase rnf152 (198 aa).

The segment at cysteine 12–arginine 55 adopts an RING-type zinc-finger fold. A helical transmembrane segment spans residues threonine 162 to leucine 182.

The protein belongs to the RNF152 family.

The protein localises to the lysosome membrane. It catalyses the reaction S-ubiquitinyl-[E2 ubiquitin-conjugating enzyme]-L-cysteine + [acceptor protein]-L-lysine = [E2 ubiquitin-conjugating enzyme]-L-cysteine + N(6)-ubiquitinyl-[acceptor protein]-L-lysine.. Its pathway is protein modification; protein ubiquitination. Functionally, E3 ubiquitin-protein ligase that acts as a negative regulator of mTORC1 signaling by mediating ubiquitination of RagA/RRAGA and RHEB. Catalyzes 'Lys-63'-linked polyubiquitination of RagA/RRAGA in response to amino acid starvation, thereby regulating mTORC1 signaling. Also mediates monoubiquitination of RHEB, promoting its association with the TSC-TBC complex and subsequent inhibition. Also mediates 'Lys-48'-linked polyubiquitination of target proteins and their subsequent targeting to the proteasome for degradation. The polypeptide is E3 ubiquitin-protein ligase rnf152 (Danio rerio (Zebrafish)).